A 161-amino-acid chain; its full sequence is 2-C-methyl-D-erythritol 2,4-cyclodiphosphate synthase (161 aa).

A divalent metal cation contacts are provided by aspartate 8 and histidine 10. Residues 8 to 10 (DVH) and 34 to 35 (HS) each bind 4-CDP-2-C-methyl-D-erythritol 2-phosphate. Histidine 42 is a binding site for a divalent metal cation. Residues 56–58 (DIG), 61–65 (FPDTD), 100–106 (AQSPKMA), 132–135 (TTEE), and phenylalanine 139 each bind 4-CDP-2-C-methyl-D-erythritol 2-phosphate.

The protein belongs to the IspF family. In terms of assembly, homotrimer. It depends on a divalent metal cation as a cofactor.

The catalysed reaction is 4-CDP-2-C-methyl-D-erythritol 2-phosphate = 2-C-methyl-D-erythritol 2,4-cyclic diphosphate + CMP. It functions in the pathway isoprenoid biosynthesis; isopentenyl diphosphate biosynthesis via DXP pathway; isopentenyl diphosphate from 1-deoxy-D-xylulose 5-phosphate: step 4/6. Its function is as follows. Involved in the biosynthesis of isopentenyl diphosphate (IPP) and dimethylallyl diphosphate (DMAPP), two major building blocks of isoprenoid compounds. Catalyzes the conversion of 4-diphosphocytidyl-2-C-methyl-D-erythritol 2-phosphate (CDP-ME2P) to 2-C-methyl-D-erythritol 2,4-cyclodiphosphate (ME-CPP) with a corresponding release of cytidine 5-monophosphate (CMP). The chain is 2-C-methyl-D-erythritol 2,4-cyclodiphosphate synthase from Clostridioides difficile (strain 630) (Peptoclostridium difficile).